We begin with the raw amino-acid sequence, 444 residues long: Deoxyguanosinetriphosphate triphosphohydrolase-like protein (444 aa).

In terms of domain architecture, HD spans 59-250 (RLTHSLEVSQ…MELADDIAYA (192 aa)).

This sequence belongs to the dGTPase family. Type 2 subfamily.

This is Deoxyguanosinetriphosphate triphosphohydrolase-like protein from Shewanella halifaxensis (strain HAW-EB4).